Consider the following 550-residue polypeptide: Lariat debranching enzyme (550 aa).

A divalent metal cation-binding residues include C8 and H10. A Phosphoserine modification is found at S28. Residues D39 and N84 each coordinate a divalent metal cation. The tract at residues 124–154 (SGIFKSHDYRKGHFECPPYNSSTIRSIYHVR) is lariat recognition loop. At K128 the chain carries N6-acetyllysine. Positions 174, 226, and 228 each coordinate a divalent metal cation. The disordered stretch occupies residues 390 to 550 (EHHQCGEYEQ…AVDDGDASAE (161 aa)). A compositionally biased stretch (polar residues) spans 416–426 (NTDTSALSSIN). Positions 430–445 (IMLDEEEEEEEEEEEA) are enriched in acidic residues. The span at 450-483 (SDMNTPSVEPASDQASDLSTSFSDIRNLPSSMFV) shows a compositional bias: polar residues. 9 positions are modified to phosphoserine: S470, S480, S484, S485, S489, S491, S494, S505, and S520. The span at 498–528 (KCGETVESGDEKDLAKFPLKRLSDEHEPEQR) shows a compositional bias: basic and acidic residues.

This sequence belongs to the lariat debranching enzyme family. Fe(2+) is required as a cofactor. The cofactor is Zn(2+). It depends on Mn(2+) as a cofactor.

It localises to the nucleus. With respect to regulation, active in presence of diverse metals including Fe(2+), Zn(2+), Mn(2+). Also activated by Ca(2+). Binds two metal cations in two adjacent alpha and beta metal-binding pockets. In terms of biological role, cleaves the 2'-5' phosphodiester linkage at the branch point of excised lariat intron RNA and converts them into linear molecules that can be subsequently degraded, thereby facilitating ribonucleotide turnover. Linked to its role in pre-mRNA processing mechanism, may also participate in retrovirus replication and have an antiviral cell-intrinsic defense function. The protein is Lariat debranching enzyme (Dbr1) of Mus musculus (Mouse).